The chain runs to 528 residues: Na(+)/H(+) antiporter NhaB (528 aa).

Helical transmembrane passes span 25 to 47, 66 to 86, 97 to 117, 130 to 164, 241 to 261, 304 to 324, 351 to 371, 390 to 410, 448 to 468, and 476 to 496; these read IISFLVINPIVFYFNPFIAGWLL, PGGLLAIEAVAIGMTSPSQVL, LLLVFMVAGIYFMKQLLLFVF, VSLLFCVSSAFLSAFLDALTVIAVIITVAVGFYSI, IRMSPVTVPVFFAGVTTCFLV, AFIGVWLIAGLALHLASVGLI, ALPFTALLAVFFAIVAVIIDL, LVVFYIANGLLSMVSDNVFVG, ATPNGQAAFLFLLTSAIAPLI, and VWMALPYTIVLSIVGVLAIQL.

This sequence belongs to the NhaB Na(+)/H(+) (TC 2.A.34) antiporter family.

The protein resides in the cell inner membrane. The catalysed reaction is 2 Na(+)(in) + 3 H(+)(out) = 2 Na(+)(out) + 3 H(+)(in). In terms of biological role, na(+)/H(+) antiporter that extrudes sodium in exchange for external protons. The sequence is that of Na(+)/H(+) antiporter NhaB from Shewanella halifaxensis (strain HAW-EB4).